Here is a 388-residue protein sequence, read N- to C-terminus: Succinate--CoA ligase [ADP-forming] subunit beta (388 aa).

One can recognise an ATP-grasp domain in the interval 9-244; that stretch reads KQLFARYGLP…QSQEDPREAQ (236 aa). ATP is bound by residues Lys-46, 53 to 55, Glu-99, Thr-102, and Glu-107; that span reads GRG. Mg(2+)-binding residues include Asn-199 and Asp-213. Substrate-binding positions include Asn-264 and 321–323; that span reads GIV.

Belongs to the succinate/malate CoA ligase beta subunit family. As to quaternary structure, heterotetramer of two alpha and two beta subunits. It depends on Mg(2+) as a cofactor.

The enzyme catalyses succinate + ATP + CoA = succinyl-CoA + ADP + phosphate. It carries out the reaction GTP + succinate + CoA = succinyl-CoA + GDP + phosphate. Its pathway is carbohydrate metabolism; tricarboxylic acid cycle; succinate from succinyl-CoA (ligase route): step 1/1. Succinyl-CoA synthetase functions in the citric acid cycle (TCA), coupling the hydrolysis of succinyl-CoA to the synthesis of either ATP or GTP and thus represents the only step of substrate-level phosphorylation in the TCA. The beta subunit provides nucleotide specificity of the enzyme and binds the substrate succinate, while the binding sites for coenzyme A and phosphate are found in the alpha subunit. In Salmonella choleraesuis (strain SC-B67), this protein is Succinate--CoA ligase [ADP-forming] subunit beta.